Here is an 890-residue protein sequence, read N- to C-terminus: uncharacterized protein (890 aa).

Residues 1 to 20 (MKILKSLVLLVLFMAMPAKA) form the signal peptide. The next 6 helical transmembrane spans lie at 518 to 538 (AALT…ALKL), 567 to 587 (TYFF…VVGA), 613 to 633 (LLFI…IITI), 651 to 671 (VIAF…IILM), 684 to 704 (ISTL…FLLI), and 775 to 795 (FLVL…SYGL). Residues 860–890 (KARKPEGGEHTNKFLAERNDVPKKEEGERKE) are disordered. Positions 862-890 (RKPEGGEHTNKFLAERNDVPKKEEGERKE) are enriched in basic and acidic residues.

It belongs to the TrbL/VirB6 family.

It is found in the cell membrane. This is an uncharacterized protein from Rickettsia felis (strain ATCC VR-1525 / URRWXCal2) (Rickettsia azadi).